Here is a 623-residue protein sequence, read N- to C-terminus: MNVHTPRKDEALTVTTGPLPASTKIFTAPEGFPGLKVPFREIALHPSAKEPPVRVYDTSGPYTDPTAQIDLERGLPRTREAWLEARGGTELYEGRDVKPEDNGNVGEKHLARAFPVRNLPRRGLPGHPVTQYEFAKAGIVTAEMAYIAERENMGRKQAAANAAHRIAEGESFGADIPEFITPEFVRDEVAAGRAIIPSNINHPELEPMIIGRNFLVKINANIGNSAVASSVAEEVDKMVWAIRWGADNVMDLSTGRNIHNTREWIIRNSPVPIGTVPIYQALEKVDGIAENLTWEVYRDTLIEQAEQGVDYFTIHAGVRLAYVPLTAKRVTGIVSRGGSIMAKWCLAHHKESFLYTHFEEICDIMRQYDVSFSLGDGLRPGSIADANDEAQFAELETLGELTQIAWAKGCQVMIEGPGHVPMHKIKVNMDKQLKHCGGAPFYTLGPLTTDIAPGYDHITSGIGAAMIGWFGCAMLCYVTPKEHLGLPDRADVKEGVITYKIAAHAADLAKGHPAAQLRDDALSRARFEFRWEDQFNLALDPERAKEFHDRTLPKEAHKVAHFCSMCGPKFCSMKITQEVRDYAESGMADMASEFRNSGGEIYLEEADAAVKASNRALGGKAAE.

Residues Asn221, Met250, Tyr279, His315, 335–337, 376–379, and Glu415 contribute to the substrate site; these read SRG and DGLR. His419 is a binding site for Zn(2+). Substrate is bound at residue Tyr442. His483 lines the Zn(2+) pocket. Cys563, Cys566, and Cys571 together coordinate [4Fe-4S] cluster.

It belongs to the ThiC family. As to quaternary structure, homodimer. Requires [4Fe-4S] cluster as cofactor.

The enzyme catalyses 5-amino-1-(5-phospho-beta-D-ribosyl)imidazole + S-adenosyl-L-methionine = 4-amino-2-methyl-5-(phosphooxymethyl)pyrimidine + CO + 5'-deoxyadenosine + formate + L-methionine + 3 H(+). Its pathway is cofactor biosynthesis; thiamine diphosphate biosynthesis. Functionally, catalyzes the synthesis of the hydroxymethylpyrimidine phosphate (HMP-P) moiety of thiamine from aminoimidazole ribotide (AIR) in a radical S-adenosyl-L-methionine (SAM)-dependent reaction. The polypeptide is Phosphomethylpyrimidine synthase (Parvibaculum lavamentivorans (strain DS-1 / DSM 13023 / NCIMB 13966)).